A 380-amino-acid chain; its full sequence is Tryptophan 2,3-dioxygenase (380 aa).

Substrate contacts are provided by residues 57 to 61 (FIITH) and Arg128. His313 lines the heme pocket. Thr328 is a binding site for substrate.

This sequence belongs to the tryptophan 2,3-dioxygenase family. In terms of assembly, homotetramer. Dimer of dimers. Requires heme as cofactor.

It catalyses the reaction L-tryptophan + O2 = N-formyl-L-kynurenine. Its pathway is amino-acid degradation; L-tryptophan degradation via kynurenine pathway; L-kynurenine from L-tryptophan: step 1/2. The protein operates within pigment biosynthesis; ommochrome biosynthesis. In terms of biological role, heme-dependent dioxygenase that catalyzes the oxidative cleavage of the L-tryptophan (L-Trp) pyrrole ring and converts L-tryptophan to N-formyl-L-kynurenine. Catalyzes the oxidative cleavage of the indole moiety. This chain is Tryptophan 2,3-dioxygenase, found in Drosophila willistoni (Fruit fly).